Consider the following 176-residue polypeptide: Large ribosomal subunit protein uL6 (176 aa).

Positions 151–169 (RPPEPYKGRGIKYTDEHIQ) are enriched in basic and acidic residues. Residues 151–176 (RPPEPYKGRGIKYTDEHIQRKAGKTK) form a disordered region.

This sequence belongs to the universal ribosomal protein uL6 family. Part of the 50S ribosomal subunit.

This protein binds to the 23S rRNA, and is important in its secondary structure. It is located near the subunit interface in the base of the L7/L12 stalk, and near the tRNA binding site of the peptidyltransferase center. The chain is Large ribosomal subunit protein uL6 from Desulfosudis oleivorans (strain DSM 6200 / JCM 39069 / Hxd3) (Desulfococcus oleovorans).